A 412-amino-acid polypeptide reads, in one-letter code: Argininosuccinate synthase (412 aa).

ATP is bound by residues 12–20 (AYSGGLDTS) and A39. L-citrulline contacts are provided by Y91 and S96. G121 contributes to the ATP binding site. Residues T123, N127, and D128 each coordinate L-aspartate. N127 is an L-citrulline binding site. R131, S180, S189, E265, and Y277 together coordinate L-citrulline.

This sequence belongs to the argininosuccinate synthase family. Type 1 subfamily. As to quaternary structure, homotetramer.

It is found in the cytoplasm. The catalysed reaction is L-citrulline + L-aspartate + ATP = 2-(N(omega)-L-arginino)succinate + AMP + diphosphate + H(+). It functions in the pathway amino-acid biosynthesis; L-arginine biosynthesis; L-arginine from L-ornithine and carbamoyl phosphate: step 2/3. In Pseudoalteromonas atlantica (strain T6c / ATCC BAA-1087), this protein is Argininosuccinate synthase.